Here is a 448-residue protein sequence, read N- to C-terminus: Probable glycine dehydrogenase (decarboxylating) subunit 1 (448 aa).

The protein belongs to the GcvP family. N-terminal subunit subfamily. As to quaternary structure, the glycine cleavage system is composed of four proteins: P, T, L and H. In this organism, the P 'protein' is a heterodimer of two subunits.

The catalysed reaction is N(6)-[(R)-lipoyl]-L-lysyl-[glycine-cleavage complex H protein] + glycine + H(+) = N(6)-[(R)-S(8)-aminomethyldihydrolipoyl]-L-lysyl-[glycine-cleavage complex H protein] + CO2. In terms of biological role, the glycine cleavage system catalyzes the degradation of glycine. The P protein binds the alpha-amino group of glycine through its pyridoxal phosphate cofactor; CO(2) is released and the remaining methylamine moiety is then transferred to the lipoamide cofactor of the H protein. This Staphylococcus carnosus (strain TM300) protein is Probable glycine dehydrogenase (decarboxylating) subunit 1.